The chain runs to 285 residues: HTH-type transcriptional regulator MurR (285 aa).

The HTH rpiR-type domain occupies 1-77 (MLYLTKIRNA…MALIGEYSAS (77 aa)). Residues 37–56 (SRKMAKQLGISQSSIVKFAQ) constitute a DNA-binding region (H-T-H motif). The region spanning 128–268 (IIEVISKAPF…FVGLVQLNDV (141 aa)) is the SIS domain.

Homotetramer.

It participates in amino-sugar metabolism; N-acetylmuramate degradation [regulation]. Functionally, represses the expression of the murPQ operon involved in the uptake and degradation of N-acetylmuramic acid (MurNAc). Binds to two adjacent inverted repeats within the operator region. MurNAc 6-phosphate, the substrate of MurQ, is the specific inducer that weakens binding of MurR to the operator. The polypeptide is HTH-type transcriptional regulator MurR (Shigella sonnei (strain Ss046)).